A 213-amino-acid chain; its full sequence is Adenylate kinase (213 aa).

Position 10-15 (10-15 (GCGKGT)) interacts with ATP. An NMP region spans residues 30–59 (STGDLMRKEISLNTTLGLKCQEYMNAGKYV). Residues threonine 31, arginine 36, 57-59 (KYV), 83-86 (GYPR), and glutamine 90 each bind AMP. The interval 124–161 (NRLVCPLCKASFNLETRKPKQEGLCDFDNTKLVKRSDD) is LID. Residue arginine 125 coordinates ATP. Positions 128 and 131 each coordinate Zn(2+). 134–135 (SF) lines the ATP pocket. Zn(2+) contacts are provided by cysteine 148 and aspartate 151. 2 residues coordinate AMP: arginine 158 and arginine 169. Asparagine 197 lines the ATP pocket.

It belongs to the adenylate kinase family. In terms of assembly, monomer.

It is found in the cytoplasm. The enzyme catalyses AMP + ATP = 2 ADP. It functions in the pathway purine metabolism; AMP biosynthesis via salvage pathway; AMP from ADP: step 1/1. Catalyzes the reversible transfer of the terminal phosphate group between ATP and AMP. Plays an important role in cellular energy homeostasis and in adenine nucleotide metabolism. The sequence is that of Adenylate kinase from Mycoplasma capricolum subsp. capricolum (strain California kid / ATCC 27343 / NCTC 10154).